Reading from the N-terminus, the 529-residue chain is DNA polymerase lambda (529 aa).

Residues 14-109 (DPEGMFAGMV…EKANEDLYVL (96 aa)) enclose the BRCT domain. The segment at 119–199 (PKKSLPAISG…ESTSVYKPPD (81 aa)) is disordered. Polar residues predominate over residues 153–175 (SHSNTQGSPDSPTSCSVPSTSAS). Over residues 182-193 (ETPTSPQSESTS) the composition is skewed to low complexity. A DNA-binding region spans residues 213 to 227 (NIYRALGEDRRSFSY). The active site involves His-260. Residues 295-298 (GPAT) are DNA-binding. DCTP is bound by residues Arg-336, 367–370 (SYRR), and 376–379 (GDLD). The tract at residues 370–379 (RGKATCGDLD) is involved in primer binding. Residues Asp-377, Asp-379, and Asp-444 each coordinate Mn(2+). The tract at residues 418-459 (EEGTDSGVDTYFGLCTYPGQELRRRIDFKVYPRDIYSFGLIA) is DNA-binding. Asn-467 serves as a coordination point for dCTP.

The protein belongs to the DNA polymerase type-X family. As to quaternary structure, interacts with the DNA repair proteins XRCC4 and LIG4. Interacts with HSP90-1. The cofactor is Mn(2+).

It localises to the nucleus. It carries out the reaction DNA(n) + a 2'-deoxyribonucleoside 5'-triphosphate = DNA(n+1) + diphosphate. Its function is as follows. Repair polymerase involved in base excision repair (BER) and responsible for repair of lesions that give rise to abasic (AP) sites in DNA. Has both DNA polymerase and terminal transferase activities. Has a 5'-deoxyribose-5-phosphate lyase (dRP lyase) activity. Involved in the repair of transposon-induced DNA double strand breaks (DSBs). Involved in repair of UV-B-mediated DNA damage during seedling development through an excision repair mechanism. Involved the repair of DSBs induced by high salinity and DNA cross-linking agent. Functions via the DNA non-homologous end joining (NHEJ) pathway. The protein is DNA polymerase lambda of Arabidopsis thaliana (Mouse-ear cress).